Consider the following 236-residue polypeptide: uncharacterized protein (236 aa).

One can recognise an HTH gntR-type domain in the interval Arg7–Val74. Positions Glu34 to Ile53 form a DNA-binding region, H-T-H motif.

This is an uncharacterized protein from Streptomyces ambofaciens.